The sequence spans 521 residues: MADTEEGFGLPSTPVDSEAKELQAEAKQDPQLGTTSKAPTSPQAAFTQQGMEGIKVFLHERELWLKFHEVGTEMIITKAGRRMFPSYKVKVTGLNPKTKYILLMDIVPADDHRYKFADNKWSVTGKAEPAMPGRLYVHPDSPATGAHWMRQLVSFQKLKLTNNHLDPFGHIILNSMHKYQPRLHIVKADENNGFGSKNTAFCTHVFPETAFIAVTSYQNHKITQLKIENNPFAKGFRGSDDMELHRMSRMQSKEYPVVPRSTVRQKVSSNHSPFSGETRVLSTSSNLGSQYQCENGVSSTSQDLLPPTNPYPISQEHSQIYHCTKRKDEECSTTEHPYKKPYMETSPAEEDPFYRSSYPQQQGLNTSYRTESAQRQACMYASSAPPTDPVPSLEDISCNTWPSVPSYSSCTVSAMQPMDRLPYQHFSAHFTSGPLMPRLSSVANHTSPQIGDTHSMFQHQTSVSHQPIVRQCGPQTGIQSPPSSLQPAEFLYSHGVPRTLSPHQYHSVHGVGMVPEWSENS.

A disordered region spans residues 1–45 (MADTEEGFGLPSTPVDSEAKELQAEAKQDPQLGTTSKAPTSPQAA). The segment covering 17 to 28 (SEAKELQAEAKQ) has biased composition (basic and acidic residues). A compositionally biased stretch (polar residues) spans 31–45 (QLGTTSKAPTSPQAA). A DNA-binding region (T-box) is located at residues 63–238 (LWLKFHEVGT…NNPFAKGFRG (176 aa)). Disordered regions lie at residues 254–281 (EYPVVPRSTVRQKVSSNHSPFSGETRVL) and 332–352 (STTEHPYKKPYMETSPAEEDP). Residues 262 to 281 (TVRQKVSSNHSPFSGETRVL) show a composition bias toward polar residues.

As to quaternary structure, monomer. Homodimer (via the T-box); binds DNA as homodimer.

It localises to the nucleus. It is found in the cytoplasm. Its function is as follows. DNA-binding protein that regulates the transcription of several genes and is involved in heart development and limb pattern formation. May bind to the core DNA motif of promoters. The polypeptide is T-box transcription factor TBX5 (TBX5) (Gallus gallus (Chicken)).